The primary structure comprises 142 residues: Transcriptional regulator MraZ (142 aa).

SpoVT-AbrB domains lie at 5 to 47 (THSP…SERE) and 76 to 119 (ASDE…DAQA).

It belongs to the MraZ family. In terms of assembly, forms oligomers.

Its subcellular location is the cytoplasm. The protein resides in the nucleoid. This Arthrobacter sp. (strain FB24) protein is Transcriptional regulator MraZ.